The sequence spans 281 residues: CMT1A duplicated region transcript 15 protein-like protein (281 aa).

2 disordered regions span residues 107–131 (KPAWEEPPPERALEVEGAPAKDQPS) and 150–187 (AENVAGERSGREGVTSTAPASRSHAAPSPGHGGKHGGG). The segment covering 108–120 (PAWEEPPPERALE) has biased composition (basic and acidic residues). The segment covering 165 to 178 (STAPASRSHAAPSP) has biased composition (low complexity). Residues 207-227 (AGTTALLLQGLFIVLILVGYI) traverse the membrane as a helical segment.

The protein resides in the membrane. The protein is CMT1A duplicated region transcript 15 protein-like protein (CDRT15L2) of Homo sapiens (Human).